A 176-amino-acid polypeptide reads, in one-letter code: Ribosome maturation factor RimM (176 aa).

The 80-residue stretch at 97–176 (EDEFYWRDLI…QIIVDWDPDF (80 aa)) folds into the PRC barrel domain.

It belongs to the RimM family. In terms of assembly, binds ribosomal protein uS19.

It is found in the cytoplasm. An accessory protein needed during the final step in the assembly of 30S ribosomal subunit, possibly for assembly of the head region. Essential for efficient processing of 16S rRNA. May be needed both before and after RbfA during the maturation of 16S rRNA. It has affinity for free ribosomal 30S subunits but not for 70S ribosomes. The chain is Ribosome maturation factor RimM from Shewanella amazonensis (strain ATCC BAA-1098 / SB2B).